A 159-amino-acid chain; its full sequence is Carbohydrate sulfotransferase 15 (159 aa).

Residues 1-159 (SGTTDFYRRI…YQPHNERLVK (159 aa)) lie on the Lumenal side of the membrane. N-linked (GlcNAc...) asparagine glycans are attached at residues Asn-42 and Asn-112.

Belongs to the sulfotransferase 1 family. Requires a divalent metal cation as cofactor. Glutathione is required as a cofactor.

It localises to the golgi apparatus membrane. It catalyses the reaction dermatan 4'-sulfate + n 3'-phosphoadenylyl sulfate = dermatan 4',6'-bissulfate + n adenosine 3',5'-bisphosphate + n H(+). The enzyme catalyses chondroitin 4'-sulfate + n 3'-phosphoadenylyl sulfate = chondroitin 4',6'-bissulfate + n adenosine 3',5'-bisphosphate + n H(+). Sulfotransferase that transfers sulfate from 3'-phosphoadenosine 5'-phosphosulfate (PAPS) to the C-6 hydroxyl group of the GalNAc 4-sulfate residue of chondroitin sulfate A and forms chondroitin sulfate E containing GlcA-GalNAc(4,6-SO(4)) repeating units. The polypeptide is Carbohydrate sulfotransferase 15 (GALNAC4S6ST) (Nototodarus sloanii (Wellington flying squid)).